The primary structure comprises 432 residues: Enolase (432 aa).

A (2R)-2-phosphoglycerate-binding site is contributed by Gln167. Glu209 functions as the Proton donor in the catalytic mechanism. Mg(2+) contacts are provided by Asp246, Glu291, and Asp318. Positions 343, 372, 373, and 394 each coordinate (2R)-2-phosphoglycerate. Catalysis depends on Lys343, which acts as the Proton acceptor.

The protein belongs to the enolase family. Component of the RNA degradosome, a multiprotein complex involved in RNA processing and mRNA degradation. It depends on Mg(2+) as a cofactor.

It localises to the cytoplasm. The protein resides in the secreted. It is found in the cell surface. The enzyme catalyses (2R)-2-phosphoglycerate = phosphoenolpyruvate + H2O. Its pathway is carbohydrate degradation; glycolysis; pyruvate from D-glyceraldehyde 3-phosphate: step 4/5. Catalyzes the reversible conversion of 2-phosphoglycerate (2-PG) into phosphoenolpyruvate (PEP). It is essential for the degradation of carbohydrates via glycolysis. In Colwellia psychrerythraea (strain 34H / ATCC BAA-681) (Vibrio psychroerythus), this protein is Enolase.